Consider the following 160-residue polypeptide: Serine-protein kinase RsbW (160 aa).

It belongs to the anti-sigma-factor family.

It catalyses the reaction L-seryl-[protein] + ATP = O-phospho-L-seryl-[protein] + ADP + H(+). It carries out the reaction L-threonyl-[protein] + ATP = O-phospho-L-threonyl-[protein] + ADP + H(+). Its function is as follows. Negative regulator of sigma-B activity. Phosphorylates and inactivates its specific antagonist protein, RsbV. Upon phosphorylation of RsbV, RsbW is released and binds to sigma-B, thereby blocking its ability to form an RNA polymerase holoenzyme (E-sigma-B). The sequence is that of Serine-protein kinase RsbW from Bacillus cereus (strain ATCC 10987 / NRS 248).